The sequence spans 329 residues: GMP reductase (329 aa).

Cysteine 178 functions as the Thioimidate intermediate in the catalytic mechanism. 207 to 230 (VIADGGIRTHGDIAKSIRMGATMV) is a binding site for NADP(+).

It belongs to the IMPDH/GMPR family. GuaC type 2 subfamily.

The enzyme catalyses IMP + NH4(+) + NADP(+) = GMP + NADPH + 2 H(+). In terms of biological role, catalyzes the irreversible NADPH-dependent deamination of GMP to IMP. It functions in the conversion of nucleobase, nucleoside and nucleotide derivatives of G to A nucleotides, and in maintaining the intracellular balance of A and G nucleotides. The sequence is that of GMP reductase from Lactococcus lactis subsp. lactis (strain IL1403) (Streptococcus lactis).